Consider the following 595-residue polypeptide: Aspartate--tRNA(Asp/Asn) ligase (595 aa).

An L-aspartate-binding site is contributed by Glu175. Residues 199-202 (QQYK) form an aspartate region. Positions 221 and 454 each coordinate L-aspartate. Residue 221–223 (RDE) coordinates ATP. Residue Glu488 participates in ATP binding. Position 495 (Arg495) interacts with L-aspartate. 540 to 543 (GIDR) serves as a coordination point for ATP.

This sequence belongs to the class-II aminoacyl-tRNA synthetase family. Type 1 subfamily. In terms of assembly, homodimer.

Its subcellular location is the cytoplasm. The catalysed reaction is tRNA(Asx) + L-aspartate + ATP = L-aspartyl-tRNA(Asx) + AMP + diphosphate. In terms of biological role, aspartyl-tRNA synthetase with relaxed tRNA specificity since it is able to aspartylate not only its cognate tRNA(Asp) but also tRNA(Asn). Reaction proceeds in two steps: L-aspartate is first activated by ATP to form Asp-AMP and then transferred to the acceptor end of tRNA(Asp/Asn). This chain is Aspartate--tRNA(Asp/Asn) ligase, found in Brucella anthropi (strain ATCC 49188 / DSM 6882 / CCUG 24695 / JCM 21032 / LMG 3331 / NBRC 15819 / NCTC 12168 / Alc 37) (Ochrobactrum anthropi).